Consider the following 88-residue polypeptide: MANTAQARKRARQAVKQNEHNSSLRSKLRTSIKAVRKAIETGDKAAAAKVFAATQATIDKIADKKIAHKNTASRQKSRLSAAIKAMAA.

Disordered regions lie at residues 1 to 29 and 69 to 88; these read MANTAQARKRARQAVKQNEHNSSLRSKLR and KNTASRQKSRLSAAIKAMAA.

This sequence belongs to the bacterial ribosomal protein bS20 family.

Functionally, binds directly to 16S ribosomal RNA. The chain is Small ribosomal subunit protein bS20 from Polynucleobacter asymbioticus (strain DSM 18221 / CIP 109841 / QLW-P1DMWA-1) (Polynucleobacter necessarius subsp. asymbioticus).